The sequence spans 370 residues: Cytochrome b (370 aa).

The next 4 membrane-spanning stretches (helical) occupy residues 30 to 50, 74 to 96, 109 to 129, and 175 to 195; these read FGSMLGMVLIFQILTGTFLAF, WVFRIFHFNGASLFFIFLYLHIF, VWMSGLTIYLLVMMEAFMGYV, and FFVLHFLLPWAILVIVLGHLI. The heme b site is built by His80 and His94. Positions 179 and 193 each coordinate heme b. Residue His198 coordinates a ubiquinone. Helical transmembrane passes span 221–240, 284–304, 316–336, and 342–362; these read YLGKDAYNIVIWLLFIVLSL, VLGVIALLMSIVTFYFFALVN, FLVFMFIISSTILSWLGQCTV, and ILSPLFSFIYFGLAYLMLFIF.

Belongs to the cytochrome b family. As to quaternary structure, the main subunits of complex b-c1 are: cytochrome b, cytochrome c1 and the Rieske protein. The cofactor is heme b.

The protein resides in the mitochondrion inner membrane. Its function is as follows. Component of the ubiquinol-cytochrome c reductase complex (complex III or cytochrome b-c1 complex) that is part of the mitochondrial respiratory chain. The b-c1 complex mediates electron transfer from ubiquinol to cytochrome c. Contributes to the generation of a proton gradient across the mitochondrial membrane that is then used for ATP synthesis. The polypeptide is Cytochrome b (Caenorhabditis elegans).